The primary structure comprises 147 residues: Shadow of prion protein (147 aa).

A signal peptide spans 1 to 24; the sequence is MNWTAATCWALLLAAAFLCDSCSA. The span at 26-43 shows a compositional bias: gly residues; sequence GGRGGARGSARGVRGGAR. The segment at 26-45 is disordered; the sequence is GGRGGARGSARGVRGGARGA. A glycan (N-linked (GlcNAc...) asparagine) is linked at Asn-107. The GPI-anchor amidated glycine moiety is linked to residue Gly-122. The propeptide at 123–147 is removed in mature form; it reads SGSVHSPRICLLLGGTLGALELLRP.

The protein belongs to the SPRN family. N-glycosylated. In terms of tissue distribution, mainly expressed in brain (at protein level). In brain, it is highly expressed in the hippocampus and cerebellum and is also expressed at lower level in other areas of the brain including the cerebral cortex, the thalamus and the medulla. In hippocampus and cerebellum it is highly expressed in the cell bodies of pyramidal cells and Purkinje cells, respectively.

Its subcellular location is the cell membrane. Its function is as follows. Prion-like protein that has PrP(C)-like neuroprotective activity. May act as a modulator for the biological actions of normal and abnormal PrP. In Mus musculus (Mouse), this protein is Shadow of prion protein (Sprn).